The following is a 142-amino-acid chain: Potassium voltage-gated channel subfamily E regulatory beta subunit 5 (142 aa).

Residues Asn-2 and Asn-25 are each glycosylated (N-linked (GlcNAc...) asparagine). The helical transmembrane segment at 61–81 (LYILLIMIFYACLAGGLILAY) threads the bilayer. Topologically, residues 82–142 (TRSRKLVEAK…PALAQGAERV (61 aa)) are cytoplasmic. Residues 119–142 (SQAEGRRQLASEGLPALAQGAERV) form a disordered region.

The protein belongs to the potassium channel KCNE family. In terms of assembly, interacts with KCNQ1; impairs KCNQ1 localization in lipid rafts and only conducts current upon strong and continued depolarization. In terms of tissue distribution, highly expressed in heart, skeletal muscle, brain, spinal cord and placenta.

It localises to the membrane. Its function is as follows. Potassium channel ancillary subunit that is essential for generation of some native K(+) currents by virtue of formation of heteromeric ion channel complex with voltage-gated potassium (Kv) channel pore-forming alpha subunits. Functions as an inhibitory beta-subunit of the repolarizing cardiac potassium ion channel KCNQ1. The protein is Potassium voltage-gated channel subfamily E regulatory beta subunit 5 (KCNE5) of Homo sapiens (Human).